A 220-amino-acid polypeptide reads, in one-letter code: Putative DNA repair glycosylase MJ1434 (220 aa).

Residues Cys202, Cys208, Cys211, and Cys217 each contribute to the [4Fe-4S] cluster site.

It belongs to the Nth/MutY family. [4Fe-4S] cluster serves as cofactor.

The polypeptide is Putative DNA repair glycosylase MJ1434 (Methanocaldococcus jannaschii (strain ATCC 43067 / DSM 2661 / JAL-1 / JCM 10045 / NBRC 100440) (Methanococcus jannaschii)).